A 301-amino-acid polypeptide reads, in one-letter code: Protoheme IX farnesyltransferase (301 aa).

9 helical membrane passes run 20-42 (FTEL…GMWL), 55-75 (VDVI…SGAF), 105-125 (ALMV…MTTW), 126-146 (QAGV…SLYA), 150-172 (LVSN…WFAV), 176-198 (FSIV…FYAI), 227-247 (MFFW…LGIV), 249-269 (VVLA…GFKM), and 280-300 (FVYS…ISIF).

This sequence belongs to the UbiA prenyltransferase family. Protoheme IX farnesyltransferase subfamily. In terms of assembly, interacts with CtaA.

The protein localises to the cell membrane. The catalysed reaction is heme b + (2E,6E)-farnesyl diphosphate + H2O = Fe(II)-heme o + diphosphate. Its pathway is porphyrin-containing compound metabolism; heme O biosynthesis; heme O from protoheme: step 1/1. Converts heme B (protoheme IX) to heme O by substitution of the vinyl group on carbon 2 of heme B porphyrin ring with a hydroxyethyl farnesyl side group. The chain is Protoheme IX farnesyltransferase from Listeria monocytogenes serotype 4b (strain CLIP80459).